A 214-amino-acid polypeptide reads, in one-letter code: uncharacterized protein (214 aa).

This is an uncharacterized protein from Rhodobacter capsulatus (Rhodopseudomonas capsulata).